We begin with the raw amino-acid sequence, 226 residues long: Lipoprotein signal peptidase (226 aa).

3 consecutive transmembrane segments (helical) span residues 12–32, 69–89, and 103–123; these read KVVA…KIWV, FLSL…AKLV, and SLII…GVIF. Catalysis depends on residues aspartate 150 and aspartate 184. The chain crosses the membrane as a helical span at residues 173-193; it reads FVFFHPVFNFADSCISIGLIL.

Belongs to the peptidase A8 family.

The protein resides in the cell inner membrane. The enzyme catalyses Release of signal peptides from bacterial membrane prolipoproteins. Hydrolyzes -Xaa-Yaa-Zaa-|-(S,diacylglyceryl)Cys-, in which Xaa is hydrophobic (preferably Leu), and Yaa (Ala or Ser) and Zaa (Gly or Ala) have small, neutral side chains.. It participates in protein modification; lipoprotein biosynthesis (signal peptide cleavage). This protein specifically catalyzes the removal of signal peptides from prolipoproteins. This Porphyromonas gingivalis (strain ATCC 33277 / DSM 20709 / CIP 103683 / JCM 12257 / NCTC 11834 / 2561) protein is Lipoprotein signal peptidase.